The chain runs to 355 residues: Putative transport protein PH1000 (355 aa).

Transmembrane regions (helical) follow at residues 34-54 (VTWI…LPFF), 55-75 (SPLF…IKLK), 84-104 (AILL…ILVY), 158-178 (FSVP…YFFL), 212-232 (VWLL…LIFK), 240-260 (ILAG…GWMI), 274-294 (IIAG…LPDF), and 310-330 (VLVL…GLII).

It belongs to the autoinducer-2 exporter (AI-2E) (TC 2.A.86) family.

The protein localises to the cell membrane. In Pyrococcus horikoshii (strain ATCC 700860 / DSM 12428 / JCM 9974 / NBRC 100139 / OT-3), this protein is Putative transport protein PH1000.